Consider the following 199-residue polypeptide: uncharacterized protein (199 aa).

Positions 1 to 23 (MKPGCTLFFLLCSALTVTTEAHA) are cleaved as a signal peptide.

This is an uncharacterized protein from Escherichia coli (strain K12).